We begin with the raw amino-acid sequence, 465 residues long: MSPGIVSQEVNGRQEPTEAARDERHGRRRRVAVIGAGLVGSLAALNFARMGNHVDLYEYREDIRQALVVQGRSINLALSQRGRKALAAVGLEQEVLATAIPMRGRMLHDVRGNSSVVLYDPINNQCLYSVGRRQLNEVLLNACDKLPNIRCHFEHKLTSANLREGSMEFRNPAKEAVAAHADLIVGCDGAFSSVRQNNVRLPGFNYSQEYIETGYLELCIPSKSGDFQMPANYLHIWPRNTFMMIALPNQDKSFTVTLSMPFEIFAGIQNQNDLLEFFKLNFRDALPLIGEQQLIKDFFKTRPQFLVSIKCRPYHYADKALILGDAAHAMVPYYGQGMNAGMEDVTLLTDILAKQLPLDETLALFTESRWQDAFAICDLAMYNYVEMRDLTKRWTFRLRKWLDTLLFRLFPGWIPLYNSVSFSSMPYRQCIANRKWQDQLLKRIFGATFLAAIVTGGAIYAQRFL.

The disordered stretch occupies residues methionine 1–glycine 26. The segment covering glutamate 15–histidine 25 has biased composition (basic and acidic residues). A run of 2 helical transmembrane segments spans residues leucine 405–tyrosine 427 and leucine 440–glutamine 462.

It belongs to the aromatic-ring hydroxylase family. KMO subfamily. Requires FAD as cofactor.

The protein localises to the mitochondrion. The protein resides in the membrane. The catalysed reaction is L-kynurenine + NADPH + O2 + H(+) = 3-hydroxy-L-kynurenine + NADP(+) + H2O. It participates in cofactor biosynthesis; NAD(+) biosynthesis; quinolinate from L-kynurenine: step 1/3. Its function is as follows. Catalyzes the hydroxylation of L-kynurenine (L-Kyn) to form 3-hydroxy-L-kynurenine (L-3OHKyn). Required for synthesis of quinolinic acid. This chain is Kynurenine 3-monooxygenase, found in Drosophila melanogaster (Fruit fly).